The sequence spans 239 residues: tRNA (guanine-N(1)-)-methyltransferase (239 aa).

S-adenosyl-L-methionine contacts are provided by residues G109 and 128 to 133; that span reads IGDYVL.

Belongs to the RNA methyltransferase TrmD family. Homodimer.

Its subcellular location is the cytoplasm. The catalysed reaction is guanosine(37) in tRNA + S-adenosyl-L-methionine = N(1)-methylguanosine(37) in tRNA + S-adenosyl-L-homocysteine + H(+). Specifically methylates guanosine-37 in various tRNAs. This Thermus thermophilus (strain ATCC 27634 / DSM 579 / HB8) protein is tRNA (guanine-N(1)-)-methyltransferase.